A 338-amino-acid polypeptide reads, in one-letter code: MSGMRTLGEFIVEKQADFPHASGDLSSLLSSIRLAAKIVNREINKAGLVDITGAAGVENIQGEVQQKLDVYANEKFKSALEARDQVCGVASEEEDEAVAFNKELNKNAKYVVLMDPLDGSSNIDVNVSVGTIFSIYRRVSPIGTPPTQEDFLQPGHKQVAAGYIIYGSSTMLVYTTGNGVNGFTYDPSLGTFCLSHENMMIPQNGNIYSINEGNYIRFPMGVKKYIKYCQENVPEDGRPYTSRYIGSLVADFHRNLLKGGIYLYPSTQSHPQGKLRLLYECNPMAFLIEQAGGLASDGVNRILDLKPTELHQRVPFFVGSTNMVKKVEEFLEVYRDEA.

Residues E92, D115, L117, and D118 each coordinate Mg(2+). Substrate is bound by residues 118–121 (DGSS), N211, Y244, 262–264 (YLY), and K274. E280 contacts Mg(2+).

Belongs to the FBPase class 1 family. As to quaternary structure, homotetramer. Requires Mg(2+) as cofactor.

It localises to the cytoplasm. It catalyses the reaction beta-D-fructose 1,6-bisphosphate + H2O = beta-D-fructose 6-phosphate + phosphate. It functions in the pathway carbohydrate biosynthesis; gluconeogenesis. The chain is Fructose-1,6-bisphosphatase class 1 from Vibrio vulnificus (strain YJ016).